The chain runs to 304 residues: Protein transport protein sec13 (304 aa).

6 WD repeats span residues 12–51, 56–97, 102–143, 147–203, 211–253, and 259–298; these read GHDDMIHDAVLDYYGRRLATCSSDRTIKIFEIEGESQRLV, GHDG…WQRI, LHKA…WEHN, AHGL…NGYK, GHTD…PGEW, and NFDAAVWRVSWSLSGNVLAASSDNNKVTLWKENLKGEWEN.

It belongs to the WD repeat SEC13 family. As to quaternary structure, the COPII coat is composed of at least 5 proteins: the sec23/24 complex, the sec13/31 complex, and the protein vtr-7/sar1. Component of the nuclear pore complex (NPC). NPC constitutes the exclusive means of nucleocytoplasmic transport. NPCs allow the passive diffusion of ions and small molecules and the active, nuclear transport receptor-mediated bidirectional transport of macromolecules such as proteins, RNAs, ribonucleoparticles (RNPs), and ribosomal subunits across the nuclear envelope. Due to its 8-fold rotational symmetry, all subunits are present with 8 copies or multiples thereof.

Its subcellular location is the cytoplasmic vesicle. It is found in the COPII-coated vesicle membrane. It localises to the endoplasmic reticulum membrane. The protein resides in the nucleus. The protein localises to the nuclear pore complex. Functionally, component of the coat protein complex II (COPII) which promotes the formation of transport vesicles from the endoplasmic reticulum (ER). The coat has two main functions, the physical deformation of the endoplasmic reticulum membrane into vesicles and the selection of cargo molecules. It also functions as a component of the nuclear pore complex (NPC). NPC components, collectively referred to as nucleoporins (NUPs), can play the role of both NPC structural components and of docking or interaction partners for transiently associated nuclear transport factors. Nup-20/sec13 is required for efficient mRNA export from the nucleus to the cytoplasm and for correct nuclear pore biogenesis and distribution. In Neurospora crassa (strain ATCC 24698 / 74-OR23-1A / CBS 708.71 / DSM 1257 / FGSC 987), this protein is Protein transport protein sec13 (nup-20).